A 269-amino-acid chain; its full sequence is Tryptophan synthase alpha chain (269 aa).

Active-site proton acceptor residues include Glu49 and Asp60.

This sequence belongs to the TrpA family. As to quaternary structure, tetramer of two alpha and two beta chains.

It carries out the reaction (1S,2R)-1-C-(indol-3-yl)glycerol 3-phosphate + L-serine = D-glyceraldehyde 3-phosphate + L-tryptophan + H2O. Its pathway is amino-acid biosynthesis; L-tryptophan biosynthesis; L-tryptophan from chorismate: step 5/5. In terms of biological role, the alpha subunit is responsible for the aldol cleavage of indoleglycerol phosphate to indole and glyceraldehyde 3-phosphate. The sequence is that of Tryptophan synthase alpha chain from Cronobacter sakazakii (strain ATCC BAA-894) (Enterobacter sakazakii).